Reading from the N-terminus, the 210-residue chain is Protein HEADING DATE REPRESSOR 1 (210 aa).

Positions 1 to 97 (MEEPASADPP…GKRSSAEMLL (97 aa)) are disordered. Residues 29-49 (QQELNKEAADEQLNNQAHEEA) adopt a coiled-coil conformation. Basic and acidic residues-rich tracts occupy residues 45–54 (AHEEAMKIDD) and 62–79 (DDVHPDPKANLSEKRKAL). A coiled-coil region spans residues 129 to 184 (RRIAIQEMNRKDREINGLNEQLEEDSRVLELLQKQLADERKKRTEIEKENSMLHEQ).

As to quaternary structure, interacts with OSK3 and OSK4. Mostly expressed in leaves, seedlings and floral organs, and, to a lower extent, in panicle, roots, nodes, internodes, leaf joint and sheath.

Its subcellular location is the nucleus. In terms of biological role, regulates flowering time via a photoperiod-dependent pathway. Suppressor of flowering that upregulates HD1 and down-regulates EHD1 in long days (LD), thus leading to the down-regulation of HD3A and RFT1. Triggers OSK4-mediated HD1 phosphorylation. This chain is Protein HEADING DATE REPRESSOR 1, found in Oryza sativa subsp. japonica (Rice).